Here is a 303-residue protein sequence, read N- to C-terminus: Regulatory protein PocR (303 aa).

Residues 195 to 293 (KKALRYIDAH…QVTPQAYRQQ (99 aa)) form the HTH araC/xylS-type domain. 2 DNA-binding regions (H-T-H motif) span residues 212–233 (EDVA…KKYQ) and 260–283 (IASI…RQTY).

It functions in the pathway cofactor biosynthesis; adenosylcobalamin biosynthesis [regulation]. The protein operates within polyol metabolism; 1,2-propanediol degradation [regulation]. In terms of biological role, positive regulatory protein of pdu and cob operons. Positively autoregulates its own expression. This is Regulatory protein PocR (pocR) from Salmonella typhimurium (strain LT2 / SGSC1412 / ATCC 700720).